A 207-amino-acid chain; its full sequence is MSEETQYEYLVPLEKYLSAGVRLGTRLSNKYLEERGFIYAVRPDGLRIFDIKKIDERLRIAAKFISRYQPDRILVHTTRPYGFKPVQMFCKFVGCRALTGRFIPGTLTNPYLPNYTEIDLLFVVDPKLDAQAVAEAAKMGIPIIALVDTDTPHQYIDFMIPCNNKGRRSLALIFWILARQVLRERGELKPDQDLPVPPEEFETRLIQ.

Belongs to the universal ribosomal protein uS2 family.

This Pyrobaculum islandicum (strain DSM 4184 / JCM 9189 / GEO3) protein is Small ribosomal subunit protein uS2.